We begin with the raw amino-acid sequence, 303 residues long: D-alanine--D-alanine ligase B (303 aa).

Positions 103-298 constitute an ATP-grasp domain; the sequence is KLLWKGAGLP…YEDLCLKVLD (196 aa). 129 to 184 is a binding site for ATP; sequence ERQLGLPIFVKPSTEGSSIGVTKVKQPGELRAAFEEARKYDKVVIAEQFIGGGEYT. Asp-252, Glu-265, and Asn-267 together coordinate Mg(2+).

It belongs to the D-alanine--D-alanine ligase family. Requires Mg(2+) as cofactor. Mn(2+) serves as cofactor.

Its subcellular location is the cytoplasm. It carries out the reaction 2 D-alanine + ATP = D-alanyl-D-alanine + ADP + phosphate + H(+). It functions in the pathway cell wall biogenesis; peptidoglycan biosynthesis. Cell wall formation. This chain is D-alanine--D-alanine ligase B, found in Chromobacterium violaceum (strain ATCC 12472 / DSM 30191 / JCM 1249 / CCUG 213 / NBRC 12614 / NCIMB 9131 / NCTC 9757 / MK).